Reading from the N-terminus, the 399-residue chain is Acetate kinase (399 aa).

Asparagine 9 is a binding site for Mg(2+). Lysine 16 contributes to the ATP binding site. Arginine 90 serves as a coordination point for substrate. Aspartate 147 functions as the Proton donor/acceptor in the catalytic mechanism. Residues 207–211, 281–283, and 333–337 each bind ATP; these read HLGNG, DFR, and GVGEN. Glutamate 387 provides a ligand contact to Mg(2+).

The protein belongs to the acetokinase family. Homodimer. Mg(2+) serves as cofactor. Mn(2+) is required as a cofactor.

The protein resides in the cytoplasm. It carries out the reaction acetate + ATP = acetyl phosphate + ADP. The protein operates within metabolic intermediate biosynthesis; acetyl-CoA biosynthesis; acetyl-CoA from acetate: step 1/2. In terms of biological role, catalyzes the formation of acetyl phosphate from acetate and ATP. Can also catalyze the reverse reaction. The protein is Acetate kinase of Mycobacterium sp. (strain JLS).